We begin with the raw amino-acid sequence, 215 residues long: Rho-related GTP-binding protein RhoF (215 aa).

Position 1 is an N-acetylmethionine (Met1). 30 to 37 (GDGGCGKT) serves as a coordination point for GTP. An Effector region motif is present at residues 52 to 60 (YAPSVFEKY). GTP is bound by residues 77-81 (DTAGQ) and 135-138 (CKTD). Cys212 is subject to Cysteine methyl ester. Cys212 carries the S-geranylgeranyl cysteine lipid modification. A propeptide spans 213–215 (LLL) (removed in mature form).

The protein belongs to the small GTPase superfamily. Rho family.

The protein localises to the cell membrane. It localises to the cytoplasm. Its subcellular location is the cytoskeleton. Its function is as follows. Plasma membrane-associated small GTPase which cycles between an active GTP-bound and an inactive GDP-bound state. Causes the formation of thin, actin-rich surface projections called filopodia. Functions cooperatively with CDC42 and Rac to generate additional structures, increasing the diversity of actin-based morphology. This Bos taurus (Bovine) protein is Rho-related GTP-binding protein RhoF (RHOF).